A 512-amino-acid polypeptide reads, in one-letter code: ATP synthase subunit alpha (512 aa).

169 to 176 is an ATP binding site; sequence GDRQTGKT.

This sequence belongs to the ATPase alpha/beta chains family. F-type ATPases have 2 components, CF(1) - the catalytic core - and CF(0) - the membrane proton channel. CF(1) has five subunits: alpha(3), beta(3), gamma(1), delta(1), epsilon(1). CF(0) has three main subunits: a(1), b(2) and c(9-12). The alpha and beta chains form an alternating ring which encloses part of the gamma chain. CF(1) is attached to CF(0) by a central stalk formed by the gamma and epsilon chains, while a peripheral stalk is formed by the delta and b chains.

The protein localises to the cell inner membrane. The enzyme catalyses ATP + H2O + 4 H(+)(in) = ADP + phosphate + 5 H(+)(out). Its function is as follows. Produces ATP from ADP in the presence of a proton gradient across the membrane. The alpha chain is a regulatory subunit. The polypeptide is ATP synthase subunit alpha (Dechloromonas aromatica (strain RCB)).